A 523-amino-acid polypeptide reads, in one-letter code: 2-isopropylmalate synthase (523 aa).

A Pyruvate carboxyltransferase domain is found at 5–267 (VIIFDTTLRD…HTNINHHEIW (263 aa)). Asp-14, His-202, His-204, and Asn-238 together coordinate Mn(2+). The regulatory domain stretch occupies residues 392 to 523 (RLDYFSVQSG…QNKENNKETV (132 aa)).

Belongs to the alpha-IPM synthase/homocitrate synthase family. LeuA type 1 subfamily. In terms of assembly, homodimer. Requires Mn(2+) as cofactor.

Its subcellular location is the cytoplasm. The enzyme catalyses 3-methyl-2-oxobutanoate + acetyl-CoA + H2O = (2S)-2-isopropylmalate + CoA + H(+). It functions in the pathway amino-acid biosynthesis; L-leucine biosynthesis; L-leucine from 3-methyl-2-oxobutanoate: step 1/4. Catalyzes the condensation of the acetyl group of acetyl-CoA with 3-methyl-2-oxobutanoate (2-ketoisovalerate) to form 3-carboxy-3-hydroxy-4-methylpentanoate (2-isopropylmalate). The polypeptide is 2-isopropylmalate synthase (Klebsiella pneumoniae (strain 342)).